Here is a 438-residue protein sequence, read N- to C-terminus: MPISKIHARSVYDSRGNPTVEVDVVTETGLHRAIVPSGASTGLHEVVELRDGDKTKWGGKGVLNAVKNVNDVIGPALIKENIDVKDQAKVDEFLNKLDGTPNKGKLGANAILGVSLAVAKAAAAEKGVPLYAHISDLAGTKKPFVLPVPFQNVLNGGSHAGGRLAFQEFMIVPDTAPTFSEGLRQGAEVYQELKALAKKKYGQSAGNVGDEGGVAPDIQTAEEALDLITEAIEQAGYTGQIKIAMDVASSEFYKEDAKKYDLDFKNPESDPTKWLTYEQLADLYKSLAAKYPIVSIEDPFAEDDWEAWSYFYKTSDFQIVGDDLTVTNPLRIKKAIELKSCNALLLKVNQIGTLTESIQAAKDSYADGWGVMVSHRSGETEDVTIADIAVGLRAGQIKTGAPARSERLAKLNQILRIEEELGANAVYAGEKFRTAVNL.

Substrate-binding residues include histidine 159 and glutamate 168. Glutamate 211 serves as the catalytic Proton donor. Mg(2+) contacts are provided by aspartate 246, glutamate 297, and aspartate 322. The substrate site is built by glutamate 297 and aspartate 322. The active-site Proton acceptor is lysine 347. Substrate is bound by residues 374 to 377 (SHRS) and lysine 398.

It belongs to the enolase family. In terms of assembly, homodimer. The cofactor is Mg(2+).

The protein resides in the cytoplasm. It catalyses the reaction (2R)-2-phosphoglycerate = phosphoenolpyruvate + H2O. It participates in carbohydrate degradation; glycolysis; pyruvate from D-glyceraldehyde 3-phosphate: step 4/5. In Penicillium chrysogenum (Penicillium notatum), this protein is Enolase (enoA).